A 756-amino-acid chain; its full sequence is NADP-dependent malic enzyme (756 aa).

Positions 1 to 428 are malic enzyme; the sequence is MTEQLRQAAL…KLTQFVYKTS (428 aa). Catalysis depends on tyrosine 39, which acts as the Proton donor. Lysine 94 serves as the catalytic Proton acceptor. The a divalent metal cation site is built by glutamate 136, aspartate 137, and aspartate 162. NADP(+) is bound by residues 195–198, asparagine 288, and asparagine 320; that span reads AGAA. The segment at 429–756 is phosphate acetyltransferase; sequence LFMRPIFSQA…AYAAVKAQQE (328 aa).

This sequence in the N-terminal section; belongs to the malic enzymes family. It in the C-terminal section; belongs to the phosphate acetyltransferase and butyryltransferase family. Mg(2+) is required as a cofactor. Mn(2+) serves as cofactor.

It catalyses the reaction (S)-malate + NADP(+) = pyruvate + CO2 + NADPH. The enzyme catalyses oxaloacetate + H(+) = pyruvate + CO2. The protein is NADP-dependent malic enzyme (maeB) of Haemophilus influenzae (strain ATCC 51907 / DSM 11121 / KW20 / Rd).